The following is a 1217-amino-acid chain: ATP-dependent helicase/nuclease subunit A (1217 aa).

A UvrD-like helicase ATP-binding domain is found at 10–475 (VIWTDAQWQS…IDLSQNFRSR (466 aa)). 31 to 38 (AAAGSGKT) serves as a coordination point for ATP. One can recognise a UvrD-like helicase C-terminal domain in the interval 476–786 (KEVLSTTNYI…RMMTIHSSKG (311 aa)).

Belongs to the helicase family. AddA subfamily. In terms of assembly, heterodimer of AddA and AddB/RexB. Mg(2+) serves as cofactor.

It carries out the reaction Couples ATP hydrolysis with the unwinding of duplex DNA by translocating in the 3'-5' direction.. It catalyses the reaction ATP + H2O = ADP + phosphate + H(+). Its function is as follows. The heterodimer acts as both an ATP-dependent DNA helicase and an ATP-dependent, dual-direction single-stranded exonuclease. Recognizes the chi site generating a DNA molecule suitable for the initiation of homologous recombination. The AddA nuclease domain is required for chi fragment generation; this subunit has the helicase and 3' -&gt; 5' nuclease activities. The sequence is that of ATP-dependent helicase/nuclease subunit A from Staphylococcus aureus (strain USA300).